A 338-amino-acid polypeptide reads, in one-letter code: Ferrochelatase (338 aa).

Residues His-210 and Glu-291 each contribute to the Fe cation site.

This sequence belongs to the ferrochelatase family.

It localises to the cytoplasm. It catalyses the reaction heme b + 2 H(+) = protoporphyrin IX + Fe(2+). The protein operates within porphyrin-containing compound metabolism; protoheme biosynthesis; protoheme from protoporphyrin-IX: step 1/1. Functionally, catalyzes the ferrous insertion into protoporphyrin IX. The protein is Ferrochelatase of Helicobacter acinonychis (strain Sheeba).